The chain runs to 388 residues: Tumor protein p53-inducible protein 13 (388 aa).

The signal sequence occupies residues methionine 1–alanine 27. Topologically, residues glutamate 28–glutamate 304 are extracellular. Residues alanine 305 to cysteine 325 traverse the membrane as a helical segment. Topologically, residues threonine 326 to aspartate 388 are cytoplasmic. The span at proline 361–proline 372 shows a compositional bias: basic residues. The disordered stretch occupies residues proline 361–aspartate 388.

It is found in the cell membrane. Its subcellular location is the cytoplasm. Functionally, may act as a tumor suppressor. Inhibits tumor cell growth, when overexpressed. This Rattus norvegicus (Rat) protein is Tumor protein p53-inducible protein 13 (Tp53i13).